We begin with the raw amino-acid sequence, 141 residues long: Ribosome-binding factor A (141 aa).

Belongs to the RbfA family. As to quaternary structure, monomer. Binds 30S ribosomal subunits, but not 50S ribosomal subunits or 70S ribosomes.

The protein resides in the cytoplasm. Its function is as follows. One of several proteins that assist in the late maturation steps of the functional core of the 30S ribosomal subunit. Associates with free 30S ribosomal subunits (but not with 30S subunits that are part of 70S ribosomes or polysomes). Required for efficient processing of 16S rRNA. May interact with the 5'-terminal helix region of 16S rRNA. This is Ribosome-binding factor A from Afipia carboxidovorans (strain ATCC 49405 / DSM 1227 / KCTC 32145 / OM5) (Oligotropha carboxidovorans).